Here is a 114-residue protein sequence, read N- to C-terminus: uncharacterized protein (114 aa).

A disordered region spans residues 1–37; it reads MLKKILSLFKKEEPKTEEKPTEVEEKKEEREEKEEKK. Basic and acidic residues predominate over residues 9–37; that stretch reads FKKEEPKTEEKPTEVEEKKEEREEKEEKK.

This is an uncharacterized protein from Aquifex aeolicus (strain VF5).